The following is a 134-amino-acid chain: D-ribose pyranase (134 aa).

Histidine 20 (proton donor) is an active-site residue. Residues aspartate 28, histidine 101, and 123-125 (YCN) each bind substrate.

Belongs to the RbsD / FucU family. RbsD subfamily. As to quaternary structure, homodecamer.

It is found in the cytoplasm. The enzyme catalyses beta-D-ribopyranose = beta-D-ribofuranose. It functions in the pathway carbohydrate metabolism; D-ribose degradation; D-ribose 5-phosphate from beta-D-ribopyranose: step 1/2. Its function is as follows. Catalyzes the interconversion of beta-pyran and beta-furan forms of D-ribose. In Pseudomonas fluorescens (strain Pf0-1), this protein is D-ribose pyranase.